Reading from the N-terminus, the 376-residue chain is UDP-N-acetylglucosamine--N-acetylmuramyl-(pentapeptide) pyrophosphoryl-undecaprenol N-acetylglucosamine transferase (376 aa).

UDP-N-acetyl-alpha-D-glucosamine is bound by residues 11–13 (TGG), Asn117, Arg160, Ser208, and Gln310.

The protein belongs to the glycosyltransferase 28 family. MurG subfamily.

It localises to the cell inner membrane. It catalyses the reaction di-trans,octa-cis-undecaprenyl diphospho-N-acetyl-alpha-D-muramoyl-L-alanyl-D-glutamyl-meso-2,6-diaminopimeloyl-D-alanyl-D-alanine + UDP-N-acetyl-alpha-D-glucosamine = di-trans,octa-cis-undecaprenyl diphospho-[N-acetyl-alpha-D-glucosaminyl-(1-&gt;4)]-N-acetyl-alpha-D-muramoyl-L-alanyl-D-glutamyl-meso-2,6-diaminopimeloyl-D-alanyl-D-alanine + UDP + H(+). The protein operates within cell wall biogenesis; peptidoglycan biosynthesis. Cell wall formation. Catalyzes the transfer of a GlcNAc subunit on undecaprenyl-pyrophosphoryl-MurNAc-pentapeptide (lipid intermediate I) to form undecaprenyl-pyrophosphoryl-MurNAc-(pentapeptide)GlcNAc (lipid intermediate II). The polypeptide is UDP-N-acetylglucosamine--N-acetylmuramyl-(pentapeptide) pyrophosphoryl-undecaprenol N-acetylglucosamine transferase (Rickettsia africae (strain ESF-5)).